Reading from the N-terminus, the 130-residue chain is MIVVGYSADPFGRAAVEHGIEEAKRRDTGLLVINATAGDAYVDARFARSGEVHDVEAHLQDSGVPFEIRQPVGVDATEELLTAMDSPDAELLVIGIRHRNPVGKLLLGSVAQRLLLECPKPVLAVKPHGF.

Lys-104 is subject to N6-acetyllysine.

The protein belongs to the universal stress protein A family. In terms of processing, acetylated on Lys-104 by PatA in the presence of acetyl-CoA as an acetyl donor.

In Mycolicibacterium smegmatis (strain ATCC 700084 / mc(2)155) (Mycobacterium smegmatis), this protein is Universal stress protein MSMEG_4207.